Consider the following 242-residue polypeptide: Putative ABC transporter ATP-binding protein TTE0246 (242 aa).

The ABC transporter domain maps to 5–242; the sequence is FELKNVSYFY…EKLLLKANLI (238 aa). 38–45 contributes to the ATP binding site; sequence GANGSGKS.

This sequence belongs to the ABC transporter superfamily.

It localises to the cell membrane. Its function is as follows. Probably part of an ABC transporter complex. Responsible for energy coupling to the transport system. The polypeptide is Putative ABC transporter ATP-binding protein TTE0246 (Caldanaerobacter subterraneus subsp. tengcongensis (strain DSM 15242 / JCM 11007 / NBRC 100824 / MB4) (Thermoanaerobacter tengcongensis)).